A 279-amino-acid polypeptide reads, in one-letter code: Movement protein (279 aa).

The protein belongs to the cucumovirus movement protein family.

The protein resides in the host cell junction. It localises to the host plasmodesma. Transports viral genome to neighboring plant cells directly through plasmosdesmata, without any budding. The movement protein allows efficient cell to cell propagation, by bypassing the host cell wall barrier. Acts by forming a tubular structure at the host plasmodesmata, enlarging it enough to allow free passage of virion capsids. This chain is Movement protein, found in Cucumber mosaic virus (strain Ixora) (CMV).